Here is a 298-residue protein sequence, read N- to C-terminus: 4-hydroxy-tetrahydrodipicolinate synthase (298 aa).

Position 51 (Thr-51) interacts with pyruvate. Tyr-139 (proton donor/acceptor) is an active-site residue. The active-site Schiff-base intermediate with substrate is Lys-167. Ile-209 serves as a coordination point for pyruvate.

Belongs to the DapA family. Homotetramer; dimer of dimers.

It is found in the cytoplasm. The catalysed reaction is L-aspartate 4-semialdehyde + pyruvate = (2S,4S)-4-hydroxy-2,3,4,5-tetrahydrodipicolinate + H2O + H(+). It participates in amino-acid biosynthesis; L-lysine biosynthesis via DAP pathway; (S)-tetrahydrodipicolinate from L-aspartate: step 3/4. In terms of biological role, catalyzes the condensation of (S)-aspartate-beta-semialdehyde [(S)-ASA] and pyruvate to 4-hydroxy-tetrahydrodipicolinate (HTPA). This Haemophilus influenzae (strain PittEE) protein is 4-hydroxy-tetrahydrodipicolinate synthase.